The following is a 351-amino-acid chain: Biotin synthase (351 aa).

The 219-residue stretch at 44–262 (NRVQVSTLLS…LAVARILMPQ (219 aa)) folds into the Radical SAM core domain. Positions 59, 63, and 66 each coordinate [4Fe-4S] cluster. Residues C103, C134, C194, and R266 each coordinate [2Fe-2S] cluster.

The protein belongs to the radical SAM superfamily. Biotin synthase family. Homodimer. Requires [4Fe-4S] cluster as cofactor. The cofactor is [2Fe-2S] cluster.

The catalysed reaction is (4R,5S)-dethiobiotin + (sulfur carrier)-SH + 2 reduced [2Fe-2S]-[ferredoxin] + 2 S-adenosyl-L-methionine = (sulfur carrier)-H + biotin + 2 5'-deoxyadenosine + 2 L-methionine + 2 oxidized [2Fe-2S]-[ferredoxin]. It participates in cofactor biosynthesis; biotin biosynthesis; biotin from 7,8-diaminononanoate: step 2/2. Functionally, catalyzes the conversion of dethiobiotin (DTB) to biotin by the insertion of a sulfur atom into dethiobiotin via a radical-based mechanism. This Pseudomonas fluorescens (strain ATCC BAA-477 / NRRL B-23932 / Pf-5) protein is Biotin synthase.